The following is a 937-amino-acid chain: Isoleucine--tRNA ligase (937 aa).

Positions 58 to 68 (PYANGTLHLGH) match the 'HIGH' region motif. Residue Glu561 participates in L-isoleucyl-5'-AMP binding. The 'KMSKS' region signature appears at 602–606 (KMSKS). Lys605 provides a ligand contact to ATP. Residues Cys900, Cys903, Cys920, and Cys923 each coordinate Zn(2+).

The protein belongs to the class-I aminoacyl-tRNA synthetase family. IleS type 1 subfamily. As to quaternary structure, monomer. It depends on Zn(2+) as a cofactor.

Its subcellular location is the cytoplasm. It carries out the reaction tRNA(Ile) + L-isoleucine + ATP = L-isoleucyl-tRNA(Ile) + AMP + diphosphate. Catalyzes the attachment of isoleucine to tRNA(Ile). As IleRS can inadvertently accommodate and process structurally similar amino acids such as valine, to avoid such errors it has two additional distinct tRNA(Ile)-dependent editing activities. One activity is designated as 'pretransfer' editing and involves the hydrolysis of activated Val-AMP. The other activity is designated 'posttransfer' editing and involves deacylation of mischarged Val-tRNA(Ile). This chain is Isoleucine--tRNA ligase, found in Histophilus somni (strain 2336) (Haemophilus somnus).